The chain runs to 249 residues: tRNA (guanine-N(1)-)-methyltransferase (249 aa).

S-adenosyl-L-methionine contacts are provided by residues glycine 113 and 132–137 (VGDFVV).

This sequence belongs to the RNA methyltransferase TrmD family. In terms of assembly, homodimer.

The protein localises to the cytoplasm. The enzyme catalyses guanosine(37) in tRNA + S-adenosyl-L-methionine = N(1)-methylguanosine(37) in tRNA + S-adenosyl-L-homocysteine + H(+). In terms of biological role, specifically methylates guanosine-37 in various tRNAs. This is tRNA (guanine-N(1)-)-methyltransferase from Desulforudis audaxviator (strain MP104C).